The sequence spans 374 residues: Queuine tRNA-ribosyltransferase (374 aa).

The active-site Proton acceptor is Asp89. Residues 89 to 93, Asp143, Gln187, and Gly214 each bind substrate; that span reads DSGGF. Positions 245–251 are RNA binding; it reads GVGKPED. Asp264 acts as the Nucleophile in catalysis. The RNA binding; important for wobble base 34 recognition stretch occupies residues 269–273; the sequence is TRNAR. 4 residues coordinate Zn(2+): Cys302, Cys304, Cys307, and His333.

It belongs to the queuine tRNA-ribosyltransferase family. Homodimer. Within each dimer, one monomer is responsible for RNA recognition and catalysis, while the other monomer binds to the replacement base PreQ1. The cofactor is Zn(2+).

The catalysed reaction is 7-aminomethyl-7-carbaguanine + guanosine(34) in tRNA = 7-aminomethyl-7-carbaguanosine(34) in tRNA + guanine. It functions in the pathway tRNA modification; tRNA-queuosine biosynthesis. Its function is as follows. Catalyzes the base-exchange of a guanine (G) residue with the queuine precursor 7-aminomethyl-7-deazaguanine (PreQ1) at position 34 (anticodon wobble position) in tRNAs with GU(N) anticodons (tRNA-Asp, -Asn, -His and -Tyr). Catalysis occurs through a double-displacement mechanism. The nucleophile active site attacks the C1' of nucleotide 34 to detach the guanine base from the RNA, forming a covalent enzyme-RNA intermediate. The proton acceptor active site deprotonates the incoming PreQ1, allowing a nucleophilic attack on the C1' of the ribose to form the product. After dissociation, two additional enzymatic reactions on the tRNA convert PreQ1 to queuine (Q), resulting in the hypermodified nucleoside queuosine (7-(((4,5-cis-dihydroxy-2-cyclopenten-1-yl)amino)methyl)-7-deazaguanosine). This chain is Queuine tRNA-ribosyltransferase, found in Shewanella frigidimarina (strain NCIMB 400).